Consider the following 776-residue polypeptide: Glutathione biosynthesis bifunctional protein GshAB (776 aa).

The interval M1–I354 is glutamate--cysteine ligase. The 255-residue stretch at K521–F775 folds into the ATP-grasp domain. S548–R606 is a binding site for ATP. 3 residues coordinate Mg(2+): D728, E745, and N747. Residues D728, E745, and N747 each coordinate Mn(2+).

This sequence in the N-terminal section; belongs to the glutamate--cysteine ligase type 1 family. Type 2 subfamily. As to quaternary structure, monomer. It depends on Mg(2+) as a cofactor. Mn(2+) serves as cofactor.

It carries out the reaction L-cysteine + L-glutamate + ATP = gamma-L-glutamyl-L-cysteine + ADP + phosphate + H(+). The catalysed reaction is gamma-L-glutamyl-L-cysteine + glycine + ATP = glutathione + ADP + phosphate + H(+). It participates in sulfur metabolism; glutathione biosynthesis; glutathione from L-cysteine and L-glutamate: step 1/2. Its pathway is sulfur metabolism; glutathione biosynthesis; glutathione from L-cysteine and L-glutamate: step 2/2. In terms of biological role, synthesizes glutathione from L-glutamate and L-cysteine via gamma-L-glutamyl-L-cysteine. This chain is Glutathione biosynthesis bifunctional protein GshAB, found in Listeria welshimeri serovar 6b (strain ATCC 35897 / DSM 20650 / CCUG 15529 / CIP 8149 / NCTC 11857 / SLCC 5334 / V8).